Consider the following 283-residue polypeptide: tRNA-cytidine(32) 2-sulfurtransferase (283 aa).

Residues S37–S42 carry the PP-loop motif motif. [4Fe-4S] cluster-binding residues include C112, C115, and C203.

The protein belongs to the TtcA family. In terms of assembly, homodimer. The cofactor is Mg(2+). [4Fe-4S] cluster serves as cofactor.

The protein localises to the cytoplasm. It catalyses the reaction cytidine(32) in tRNA + S-sulfanyl-L-cysteinyl-[cysteine desulfurase] + AH2 + ATP = 2-thiocytidine(32) in tRNA + L-cysteinyl-[cysteine desulfurase] + A + AMP + diphosphate + H(+). Its pathway is tRNA modification. Catalyzes the ATP-dependent 2-thiolation of cytidine in position 32 of tRNA, to form 2-thiocytidine (s(2)C32). The sulfur atoms are provided by the cysteine/cysteine desulfurase (IscS) system. This Legionella pneumophila (strain Paris) protein is tRNA-cytidine(32) 2-sulfurtransferase.